The sequence spans 744 residues: CCR4-NOT transcription complex subunit 10 (744 aa).

A compositionally biased stretch (basic and acidic residues) spans 1-16 (MAADKPADQGAEKHEG). The interval 1 to 25 (MAADKPADQGAEKHEGTGQSSGITD) is disordered. Ala2 carries the post-translational modification N-acetylalanine. The stretch at 74-107 (KSNQTTTDNLRQTLNQLKNQVHSAVEEMDGLDDV) forms a coiled coil. Low complexity predominate over residues 183–199 (NNNKNGKNETGNNNNKD). Disordered regions lie at residues 183–204 (NNNKNGKNETGNNNNKDGSNHK), 477–521 (QDPK…PPSS), and 602–634 (VSLGISSNEQDQGSDKGENEAMESSGKRAPQCY). Residues 484-495 (GAKNSNQLGGNT) show a composition bias toward polar residues. The segment covering 496-506 (ESSESSETCSS) has biased composition (low complexity). Residues 602 to 612 (VSLGISSNEQD) show a composition bias toward polar residues.

It belongs to the CNOT10 family. As to quaternary structure, component of the CCR4-NOT complex; distinct complexes seem to exist that differ in the participation of probably mutually exclusive catalytic subunits. CNOT10 and CNOT11 form a subcomplex docked to the CNOT1 scaffold.

Its subcellular location is the cytoplasm. The protein resides in the nucleus. In terms of biological role, component of the CCR4-NOT complex which is one of the major cellular mRNA deadenylases and is linked to various cellular processes including bulk mRNA degradation, miRNA-mediated repression, translational repression during translational initiation and general transcription regulation. Additional complex functions may be a consequence of its influence on mRNA expression. Is not required for association of CNOT7 to the CCR4-NOT complex. This chain is CCR4-NOT transcription complex subunit 10 (CNOT10), found in Homo sapiens (Human).